Reading from the N-terminus, the 94-residue chain is Evasin P1172 (94 aa).

Cystine bridges form between C35–C54, C39–C56, and C50–C67. N-linked (GlcNAc...) asparagine glycosylation is found at N38, N44, N53, and N80.

It is found in the secreted. In terms of biological role, salivary chemokine-binding protein which binds to host chemokines CXCL1, CXCL2, CXCL5 and CXCL8. The chain is Evasin P1172 from Ixodes ricinus (Common tick).